The following is a 206-amino-acid chain: Large ribosomal subunit protein uL4 (206 aa).

Belongs to the universal ribosomal protein uL4 family. In terms of assembly, part of the 50S ribosomal subunit.

In terms of biological role, one of the primary rRNA binding proteins, this protein initially binds near the 5'-end of the 23S rRNA. It is important during the early stages of 50S assembly. It makes multiple contacts with different domains of the 23S rRNA in the assembled 50S subunit and ribosome. Forms part of the polypeptide exit tunnel. In Rhodopseudomonas palustris (strain HaA2), this protein is Large ribosomal subunit protein uL4.